Here is a 445-residue protein sequence, read N- to C-terminus: Phosphoglucosamine mutase (445 aa).

S102 (phosphoserine intermediate) is an active-site residue. Mg(2+)-binding residues include S102, D241, D243, and D245. S102 is subject to Phosphoserine.

It belongs to the phosphohexose mutase family. Requires Mg(2+) as cofactor. In terms of processing, activated by phosphorylation.

The enzyme catalyses alpha-D-glucosamine 1-phosphate = D-glucosamine 6-phosphate. Functionally, catalyzes the conversion of glucosamine-6-phosphate to glucosamine-1-phosphate. This Klebsiella pneumoniae (strain 342) protein is Phosphoglucosamine mutase.